The chain runs to 78 residues: Mambalgin-1 (78 aa).

Residues 1–21 form the signal peptide; the sequence is MKTLLLTLLVVTIVCLDLGYS. Intrachain disulfides connect Cys-24/Cys-40, Cys-33/Cys-58, Cys-62/Cys-70, and Cys-71/Cys-76.

It belongs to the three-finger toxin family. Short-chain subfamily. Mambalgin sub-subfamily. In terms of tissue distribution, expressed by the venom gland.

It is found in the secreted. In terms of biological role, this three-finger toxin inhibits ASIC channels. It acts as a gating modifier toxin by decreasing the apparent proton sensitivity of activation and by slightly increasing the apparent proton sensitivity for inactivation. It binds more tightly to the closed state and to a much lesser extent the inactivated/desensitized state of ASIC1a isoform of ASIC1. It interacts directly with the outside surface of the thumb domain of chicken ASIC1a (ASIC1a), but does not insert into the acidic pocket as suggested for mambalgin-2. This binding leads to relocation of the thumb domain that could disrupt the acidic pocket of cASIC1a. It reversibly inhibits rat ASIC1a (IC(50)=3.4-55 nM), rat ASIC1a-ASIC2b (IC(50)=61 nM), rat ASIC1a-ASIC1b (IC(50)=72 nM), human ASIC1a (IC(50)=127-580 nM), chicken ASIC1a (IC(50)=123.6 nM), rat ASIC1b (IC(50)=22.2-203 nM), rat ASIC1a-ASIC2a (IC(50)=152-252 nM). In vivo, it shows a potent naloxone-resistant analgesic effect against acute and inflammatory pain upon central and peripheral injection. In addition, it also has an opioid-independent effect on both thermal and mechanical inflammatory pain after systemic administration and is effective against neuropathic pain. The protein is Mambalgin-1 of Dendroaspis polylepis polylepis (Black mamba).